A 258-amino-acid chain; its full sequence is Acetylglutamate kinase (258 aa).

Residues 41–42 (GG), Arg63, and Asn156 each bind substrate.

Belongs to the acetylglutamate kinase family. ArgB subfamily.

It is found in the cytoplasm. The enzyme catalyses N-acetyl-L-glutamate + ATP = N-acetyl-L-glutamyl 5-phosphate + ADP. It functions in the pathway amino-acid biosynthesis; L-arginine biosynthesis; N(2)-acetyl-L-ornithine from L-glutamate: step 2/4. Its function is as follows. Catalyzes the ATP-dependent phosphorylation of N-acetyl-L-glutamate. The sequence is that of Acetylglutamate kinase from Bacillus licheniformis (strain ATCC 14580 / DSM 13 / JCM 2505 / CCUG 7422 / NBRC 12200 / NCIMB 9375 / NCTC 10341 / NRRL NRS-1264 / Gibson 46).